Here is a 1312-residue protein sequence, read N- to C-terminus: uncharacterized protein (1312 aa).

The signal sequence occupies residues 1 to 20; that stretch reads MRNNLIYTMFLSCLHFETFC. A compositionally biased stretch (low complexity) spans 299 to 344; it reads TTTSSSTMLSSTTLLTTETETRESSSTGSTQTTTPSTEPSTTITTP. 8 disordered regions span residues 299–503, 565–609, 645–692, 749–775, 812–864, 899–942, 1048–1079, and 1114–1165; these read TTTS…TTTY, EITS…PTGG, KETR…PTGG, SSSS…PTGG, KTRT…GGTT, KTRT…PTGG, KTRT…TGGT, and NTTR…TLET. Positions 345 to 357 are enriched in polar residues; that stretch reads MEQSSTVSSVQKT. Residues 365 to 503 show a composition bias toward low complexity; that stretch reads SSSTTVPTSA…STPATPTTTY (139 aa). The segment covering 565–574 has biased composition (basic and acidic residues); that stretch reads EITSDAEGCK. Positions 576–609 are enriched in low complexity; it reads TSSTPTPSSTSVHSTTATPSTTPGTTTYNWPTGG. Basic and acidic residues predominate over residues 645–659; sequence KETRTETTTDADGCK. Over residues 660 to 692 the composition is skewed to low complexity; the sequence is KTSSTSSSTPSLKHSTTPTPTPGTTTYNWPTGG. Residues 813–825 show a composition bias toward basic and acidic residues; it reads TRTETTTDAEGCK. Positions 826 to 864 are enriched in low complexity; it reads KTSSTSKISTTPTSPTSSKPTPTSTSMTTTYNWPTGGTT. Residues 899 to 908 are compositionally biased toward polar residues; the sequence is KTRTETTTDA. Low complexity predominate over residues 914 to 942; the sequence is TSSTSLKPTSPSSSTASPPTTTYNWPTGG. A compositionally biased stretch (polar residues) spans 1048–1057; the sequence is KTRTETTSDA. Over residues 1063–1076 the composition is skewed to low complexity; the sequence is TSTTQTPTTFNWPT. The segment covering 1114 to 1123 has biased composition (polar residues); the sequence is NTTRTETTSD. A compositionally biased stretch (low complexity) spans 1130-1154; the sequence is TSSGTTSTMSPGTTGGTTVSRTTNS. The span at 1155–1164 shows a compositional bias: polar residues; it reads NNPIDSSTLE. The region spanning 1239–1306 is the Sushi domain; that stretch reads ATCSSLNLNL…WSGTPEKCVA (68 aa). 2 disulfide bridges follow: C1241-C1291 and C1273-C1304.

It is found in the secreted. This is an uncharacterized protein from Caenorhabditis elegans.